A 272-amino-acid chain; its full sequence is Phosphonates import ATP-binding protein PhnC (272 aa).

The ABC transporter domain occupies 2-244 (LVFDKVNRVY…IQKRLYEIEH (243 aa)). 35 to 42 (GPSGAGKS) contributes to the ATP binding site.

The protein belongs to the ABC transporter superfamily. Phosphonates importer (TC 3.A.1.9.1) family. The complex is composed of two ATP-binding proteins (PhnC), two transmembrane proteins (PhnE) and a solute-binding protein (PhnD).

It localises to the cell inner membrane. The enzyme catalyses phosphonate(out) + ATP + H2O = phosphonate(in) + ADP + phosphate + H(+). Part of the ABC transporter complex PhnCDE involved in phosphonates import. Responsible for energy coupling to the transport system. The protein is Phosphonates import ATP-binding protein PhnC of Hydrogenovibrio crunogenus (strain DSM 25203 / XCL-2) (Thiomicrospira crunogena).